The primary structure comprises 338 residues: Glycerol-3-phosphate dehydrogenase [NAD(P)+] (338 aa).

4 residues coordinate NADPH: Ser-14, Tyr-15, His-35, and Lys-109. Sn-glycerol 3-phosphate contacts are provided by Lys-109, Gly-138, and Thr-140. Position 142 (Ala-142) interacts with NADPH. Sn-glycerol 3-phosphate-binding residues include Lys-194, Asp-247, Ser-257, Arg-258, and Asn-259. The Proton acceptor role is filled by Lys-194. Arg-258 contacts NADPH. Residues Val-282 and Glu-284 each coordinate NADPH.

Belongs to the NAD-dependent glycerol-3-phosphate dehydrogenase family.

It localises to the cytoplasm. It catalyses the reaction sn-glycerol 3-phosphate + NAD(+) = dihydroxyacetone phosphate + NADH + H(+). The catalysed reaction is sn-glycerol 3-phosphate + NADP(+) = dihydroxyacetone phosphate + NADPH + H(+). Its pathway is membrane lipid metabolism; glycerophospholipid metabolism. Catalyzes the reduction of the glycolytic intermediate dihydroxyacetone phosphate (DHAP) to sn-glycerol 3-phosphate (G3P), the key precursor for phospholipid synthesis. The polypeptide is Glycerol-3-phosphate dehydrogenase [NAD(P)+] (Shewanella baltica (strain OS155 / ATCC BAA-1091)).